The chain runs to 146 residues: Anti-sigma F factor (146 aa).

It belongs to the anti-sigma-factor family.

The catalysed reaction is L-seryl-[protein] + ATP = O-phospho-L-seryl-[protein] + ADP + H(+). The enzyme catalyses L-threonyl-[protein] + ATP = O-phospho-L-threonyl-[protein] + ADP + H(+). Functionally, binds to sigma F and blocks its ability to form an RNA polymerase holoenzyme (E-sigma F). Phosphorylates SpoIIAA on a serine residue. This phosphorylation may enable SpoIIAA to act as an anti-anti-sigma factor that counteracts SpoIIAB and thus releases sigma F from inhibition. The polypeptide is Anti-sigma F factor (Geobacillus kaustophilus (strain HTA426)).